The following is a 328-amino-acid chain: DNA-directed RNA polymerase subunit alpha (328 aa).

Positions 1-234 are alpha N-terminal domain (alpha-NTD); the sequence is MQGSVTEFLK…EQLDAFVDLR (234 aa). Positions 248–328 are alpha C-terminal domain (alpha-CTD); it reads FXPILLRPVD…NWPPASIAED (81 aa).

This sequence belongs to the RNA polymerase alpha chain family. As to quaternary structure, homodimer. The RNAP catalytic core consists of 2 alpha, 1 beta, 1 beta' and 1 omega subunit. When a sigma factor is associated with the core the holoenzyme is formed, which can initiate transcription.

The catalysed reaction is RNA(n) + a ribonucleoside 5'-triphosphate = RNA(n+1) + diphosphate. Functionally, DNA-dependent RNA polymerase catalyzes the transcription of DNA into RNA using the four ribonucleoside triphosphates as substrates. The polypeptide is DNA-directed RNA polymerase subunit alpha (Haemophilus influenzae (strain ATCC 51907 / DSM 11121 / KW20 / Rd)).